The following is an 846-amino-acid chain: Auxin response factor 2A (846 aa).

Over residues 1–12 (MAASEVSIQGYS) the composition is skewed to polar residues. Positions 1 to 30 (MAASEVSIQGYSEPSDGSRPVSETGRSSSG) are disordered. Residues 146-248 (FCKTLTASDT…ELRVGVRRAM (103 aa)) constitute a DNA-binding region (TF-B3). 2 disordered regions span residues 380–423 (PPAL…HSQA) and 660–693 (DMNI…GVAA). Polar residues-rich tracts occupy residues 398–408 (ILPTSPDSSVL) and 414–423 (SRATADHSQA). A compositionally biased stretch (basic and acidic residues) spans 675 to 693 (SDQRSEQSKGSKVDDGVAA). A PB1 domain is found at 720–804 (RSCTKVHKQG…RKIFIYTKEE (85 aa)). 2 stretches are compositionally biased toward polar residues: residues 809–824 (NPGT…SSVA) and 836–846 (QLPSESGQAES). The tract at residues 809 to 846 (NPGTLNSKGEDTSSVAEGSDAKEVKNLQLPSESGQAES) is disordered.

Belongs to the ARF family. Homodimers and heterodimers. Interacts with ASR1. In terms of tissue distribution, expressed in root, leaf and flower. Expressed in flower buds about three days before opening including ovary, petal and sepal with the highest in stamen. Expressed in stem. Expressed in fruit. Expressed in seeds.

The protein resides in the nucleus. Auxin response factors (ARFs) are transcriptional factors that bind specifically to the DNA sequence 5'-TGTCTC-3' found in the auxin-responsive promoter elements (AuxREs). Could act as transcriptional activator or repressor. Involved in the control of fruit ripening process. Regulates expression of a number of ripening regulators, transcription factors, and ethylene biosynthesis and signaling components. May act as a transcriptional repressor of auxin-responsive genes. Regulates vegetative growth, lateral root formation and flower organ senescence, possibly partially by regulating gene expression of auxin and ethylene response factor (ERF) genes. Plays a negative role in axillary shoot meristem formation. The protein is Auxin response factor 2A of Solanum lycopersicum (Tomato).